Consider the following 281-residue polypeptide: Beta-etherase (281 aa).

Positions 11 to 87 (DLQLESGCTI…YLDEKYPDRP (77 aa)) constitute a GST N-terminal domain. The disordered stretch occupies residues 244-281 (GDPEPFVRQTGPAGAGGQALNKGPQTTKMPPRVAEKAD).

Belongs to the GST superfamily.

It is found in the cell inner membrane. Able to degrade various dimeric lignin compounds. Catalyzes the unique and reductive cleavage of arylglycerol-beta-aryl ether. This chain is Beta-etherase (ligE), found in Sphingobium sp. (strain NBRC 103272 / SYK-6).